A 248-amino-acid chain; its full sequence is 23S rRNA (guanosine-2'-O-)-methyltransferase RlmB (248 aa).

S-adenosyl-L-methionine is bound by residues G200, I220, and L229.

It belongs to the class IV-like SAM-binding methyltransferase superfamily. RNA methyltransferase TrmH family. RlmB subfamily.

The protein resides in the cytoplasm. It carries out the reaction guanosine(2251) in 23S rRNA + S-adenosyl-L-methionine = 2'-O-methylguanosine(2251) in 23S rRNA + S-adenosyl-L-homocysteine + H(+). Functionally, specifically methylates the ribose of guanosine 2251 in 23S rRNA. The chain is 23S rRNA (guanosine-2'-O-)-methyltransferase RlmB from Acinetobacter baylyi (strain ATCC 33305 / BD413 / ADP1).